The following is a 271-amino-acid chain: Formamidopyrimidine-DNA glycosylase (271 aa).

Proline 2 acts as the Schiff-base intermediate with DNA in catalysis. Glutamate 3 serves as the catalytic Proton donor. Catalysis depends on lysine 57, which acts as the Proton donor; for beta-elimination activity. Histidine 90, arginine 109, and lysine 151 together coordinate DNA. An FPG-type zinc finger spans residues 236-270; the sequence is HVYGRGGDTCTHCGQLLSEIRLGQRATVFCSICQQ. Arginine 260 (proton donor; for delta-elimination activity) is an active-site residue.

The protein belongs to the FPG family. In terms of assembly, monomer. Requires Zn(2+) as cofactor.

It catalyses the reaction Hydrolysis of DNA containing ring-opened 7-methylguanine residues, releasing 2,6-diamino-4-hydroxy-5-(N-methyl)formamidopyrimidine.. The catalysed reaction is 2'-deoxyribonucleotide-(2'-deoxyribose 5'-phosphate)-2'-deoxyribonucleotide-DNA = a 3'-end 2'-deoxyribonucleotide-(2,3-dehydro-2,3-deoxyribose 5'-phosphate)-DNA + a 5'-end 5'-phospho-2'-deoxyribonucleoside-DNA + H(+). Involved in base excision repair of DNA damaged by oxidation or by mutagenic agents. Acts as a DNA glycosylase that recognizes and removes damaged bases. Has a preference for oxidized purines, such as 7,8-dihydro-8-oxoguanine (8-oxoG). Has AP (apurinic/apyrimidinic) lyase activity and introduces nicks in the DNA strand. Cleaves the DNA backbone by beta-delta elimination to generate a single-strand break at the site of the removed base with both 3'- and 5'-phosphates. The polypeptide is Formamidopyrimidine-DNA glycosylase (Shewanella piezotolerans (strain WP3 / JCM 13877)).